The primary structure comprises 510 residues: MRSLRFISAEALVSHSQLVQENLDNIAYNLYPLLFKASYLLEQADVTRALLSHWPLEEFRLAVLLRPNTDHPEDLRDRACKACLEACMQGIADHVLKSGSNRLRVADFTGIQDVQVQQCPCGRALGRWGRTKVLARTCCQLQGQPCSAGHPIEVFADLFVTEGNFDMVVQALKPLGPAPLQVCCPSLRADSLSPGQLLQVLGLAGPGNLRKLEVVHNVRLHAGHVQQLLTQVGFPQLTSLTLPTKAFDAPPTCAPDPEGEDLLLTSIAWELSQMNQLTELSVAFSTLTGKIQTLLSPLKTPLRVLDLANCALNHEDISFLADCNHTAHLEVLDLSGHNLVHLYPSTFFRLLSQAAQTLRVLTLEECNITDSHVNMMILGLSPCSQLQQFKFLGNPLSGSALRRLFAALCELPRLRHIEFPVPKDCYPEGAIYPQDELSVSKFDQQKYDVIAEDLRAVLLRANREDIQVSTPLFGSFDPDIHETSNELGTFLLQAFKTALENFSRALEQME.

Residues 100–137 (SNRLRVADFTGIQDVQVQQCPCGRALGRWGRTKVLART) form an LRR 1; degenerate repeat. Residues 181 to 205 (QVCCPSLRADSLSPGQLLQVLGLAG) form an LRR 2; degenerate repeat. The stretch at 234-273 (FPQLTSLTLPTKAFDAPPTCAPDPEGEDLLLTSIAWELSQ) is one LRR 4; degenerate repeat. LRR repeat units follow at residues 274–298 (MNQL…LSPL), 299–330 (KTPL…AHLE), 331–349 (VLDL…TFFR), 355–382 (AQTL…GLSP), and 383–407 (CSQL…LFAA).

This sequence belongs to the PRAME family. LRRC14 subfamily.

The sequence is that of Leucine-rich repeat-containing protein 14B from Mus musculus (Mouse).